Here is a 159-residue protein sequence, read N- to C-terminus: uncharacterized protein (159 aa).

The 139-residue stretch at 1–139 folds into the N-acetyltransferase domain; it reads MNIIPTCQVP…TARKMKPEIP (139 aa).

This is an uncharacterized protein from Bacillus subtilis (strain 168).